Reading from the N-terminus, the 551-residue chain is Putative ABC transporter ATP-binding protein BA_3364/GBAA_3364/BAS3118 (551 aa).

ABC transporter domains follow at residues 5 to 243 (AEIK…FRPF) and 293 to 525 (LSAE…SINR). Residues 39–46 (GGSGSGKT) and 327–334 (GKNGTGKS) each bind ATP.

It belongs to the ABC transporter superfamily.

Its subcellular location is the cell membrane. Functionally, probably part of an ABC transporter complex. Responsible for energy coupling to the transport system. The polypeptide is Putative ABC transporter ATP-binding protein BA_3364/GBAA_3364/BAS3118 (Bacillus anthracis).